The sequence spans 269 residues: Meiotically up-regulated gene 43 protein (269 aa).

The protein resides in the mitochondrion. In terms of biological role, has a role in meiosis. This Schizosaccharomyces pombe (strain 972 / ATCC 24843) (Fission yeast) protein is Meiotically up-regulated gene 43 protein (mug43).